We begin with the raw amino-acid sequence, 111 residues long: UPF0321 protein P20C8.02c (111 aa).

Residues 1–17 (MLLLFCICCVFIKLVLA) form the signal peptide. A glycan (N-linked (GlcNAc...) asparagine) is linked at Asn-20.

The protein belongs to the UPF0321 family.

The sequence is that of UPF0321 protein P20C8.02c from Schizosaccharomyces pombe (strain 972 / ATCC 24843) (Fission yeast).